The sequence spans 550 residues: Glucose-6-phosphate isomerase (550 aa).

Glutamate 356 functions as the Proton donor in the catalytic mechanism. Catalysis depends on residues histidine 387 and lysine 515.

It belongs to the GPI family.

The protein localises to the cytoplasm. The catalysed reaction is alpha-D-glucose 6-phosphate = beta-D-fructose 6-phosphate. It functions in the pathway carbohydrate biosynthesis; gluconeogenesis. Its pathway is carbohydrate degradation; glycolysis; D-glyceraldehyde 3-phosphate and glycerone phosphate from D-glucose: step 2/4. Functionally, catalyzes the reversible isomerization of glucose-6-phosphate to fructose-6-phosphate. This Vibrio cholerae serotype O1 (strain ATCC 39541 / Classical Ogawa 395 / O395) protein is Glucose-6-phosphate isomerase.